A 434-amino-acid chain; its full sequence is GTPase Obg (434 aa).

An Obg domain is found at 1-158 (MFIDRAKIYV…RWLYLELKLL (158 aa)). In terms of domain architecture, OBG-type G spans 159 to 328 (ADVGLLGLPN…LLELMEKYVK (170 aa)). Residues 165–172 (GLPNAGKS), 190–194 (FTTKT), 211–214 (DIPG), 280–283 (NKID), and 309–311 (SAK) each bind GTP. The Mg(2+) site is built by serine 172 and threonine 192. An OCT domain is found at 347-425 (KQENKKQEIP…IGNYVFKYNS (79 aa)).

It belongs to the TRAFAC class OBG-HflX-like GTPase superfamily. OBG GTPase family. Monomer. The cofactor is Mg(2+).

It is found in the cytoplasm. An essential GTPase which binds GTP, GDP and possibly (p)ppGpp with moderate affinity, with high nucleotide exchange rates and a fairly low GTP hydrolysis rate. Plays a role in control of the cell cycle, stress response, ribosome biogenesis and in those bacteria that undergo differentiation, in morphogenesis control. The polypeptide is GTPase Obg (Dictyoglomus turgidum (strain DSM 6724 / Z-1310)).